Reading from the N-terminus, the 294-residue chain is Putative cuticle collagen 145 (294 aa).

Positions 1–30 are cleaved as a signal peptide; sequence MEKILVTFSTGAASIAVLAVLFTVPSLYNT. Residues 100–112 show a composition bias toward pro residues; that stretch reads TCPPGPPGPPGQP. Disordered stretches follow at residues 100-133 and 148-276; these read TCPPGPPGPPGQPGAPGTPGAPGPKGDDNTATFA and PQGP…LPGN. Triple-helical region regions lie at residues 102–127 and 148–277; these read PPGPPGPPGQPGAPGTPGAPGPKGDD and PQGP…PGND. Low complexity-rich tracts occupy residues 164–194 and 219–265; these read AGPDGQPGFPGQRGNDGFPGAPGAPGDNGQP and APGA…DGQP. Residues 218 to 276 form the Collagen-like domain; that stretch reads GAPGAPGNAGPAGPAGQDGFPGQDGAPGPAGPAGQDGFPGNAGSDGQPGAPGGPGLPGN.

It belongs to the cuticular collagen family. As to quaternary structure, collagen polypeptide chains are complexed within the cuticle by disulfide bonds and other types of covalent cross-links.

Nematode cuticles are composed largely of collagen-like proteins. The cuticle functions both as an exoskeleton and as a barrier to protect the worm from its environment. The polypeptide is Putative cuticle collagen 145 (col-145) (Caenorhabditis elegans).